The sequence spans 42 residues: Conodipine-M beta chain (42 aa).

Heterodimer of an alpha and a beta chains; probably disulfide-linked. In terms of tissue distribution, expressed by the venom duct.

Its subcellular location is the secreted. Functionally, heterodimer: conodipine-M catalyzes the calcium-dependent hydrolysis of the 2-acyl groups in 3-sn-phosphoglycerides. This activity may be supported by the alpha chain. Conodipine-M inhibits the binding of isradipine (a ligand specific for L-type calcium channel) to L-type calcium channels. This is Conodipine-M beta chain from Conus magus (Magical cone).